Reading from the N-terminus, the 493-residue chain is Glutamyl-tRNA(Gln) amidotransferase subunit A (493 aa).

Catalysis depends on charge relay system residues Lys-78 and Ser-159. Catalysis depends on Ser-183, which acts as the Acyl-ester intermediate.

It belongs to the amidase family. GatA subfamily. As to quaternary structure, heterotrimer of A, B and C subunits.

It carries out the reaction L-glutamyl-tRNA(Gln) + L-glutamine + ATP + H2O = L-glutaminyl-tRNA(Gln) + L-glutamate + ADP + phosphate + H(+). Allows the formation of correctly charged Gln-tRNA(Gln) through the transamidation of misacylated Glu-tRNA(Gln) in organisms which lack glutaminyl-tRNA synthetase. The reaction takes place in the presence of glutamine and ATP through an activated gamma-phospho-Glu-tRNA(Gln). This chain is Glutamyl-tRNA(Gln) amidotransferase subunit A, found in Sphingopyxis alaskensis (strain DSM 13593 / LMG 18877 / RB2256) (Sphingomonas alaskensis).